An 81-amino-acid polypeptide reads, in one-letter code: Salivary thrombin inhibitor anophelin (81 aa).

The signal sequence occupies residues 1-22 (MANKLFLISLLCVVLVAKIAQA). N45 is a glycosylation site (N-linked (GlcNAc...) asparagine). Residues 70-73 (DPGR) form a blocks active site cleft of host thrombin in a reverse direction compared to substrates region.

It belongs to the anophelin family. In terms of assembly, interacts with human F2 (thrombin); the interaction results in thrombin inhibition.

The protein localises to the secreted. Salivary protein with anticoagulant activity that inhibits host thrombin (F2). This Anopheles darlingi (Mosquito) protein is Salivary thrombin inhibitor anophelin.